Consider the following 389-residue polypeptide: Na(+)/H(+) antiporter NhaA (389 aa).

10 helical membrane-spanning segments follow: residues 8-28 (INFL…ALVW), 48-68 (ISLH…MAAI), 91-111 (MATL…NALI), 119-139 (GWGI…RVVF), 173-193 (NPVA…AYLL), 214-234 (AGLY…VPFL), 262-282 (WKIF…GVEF), 288-308 (LTWL…FLMG), 327-347 (LLVA…VSGV), and 361-381 (GALF…VLGI).

This sequence belongs to the NhaA Na(+)/H(+) (TC 2.A.33) antiporter family.

The protein localises to the cell membrane. The enzyme catalyses Na(+)(in) + 2 H(+)(out) = Na(+)(out) + 2 H(+)(in). Na(+)/H(+) antiporter that extrudes sodium in exchange for external protons. This Desulfitobacterium hafniense (strain DSM 10664 / DCB-2) protein is Na(+)/H(+) antiporter NhaA.